A 281-amino-acid polypeptide reads, in one-letter code: uncharacterized protein (281 aa).

Residues 242–281 (IDKQSRKKNIIREINDIKSKINDLSNYMDNLISELDDLFD) adopt a coiled-coil conformation.

This is an uncharacterized protein from Acanthamoeba polyphaga (Amoeba).